The primary structure comprises 408 residues: Flavohemoprotein (408 aa).

A Globin domain is found at 1–138; the sequence is MLSEKTIRIV…LADIFIGREG (138 aa). A heme b-binding site is contributed by His85. Catalysis depends on charge relay system residues Tyr95 and Glu137. Residues 149 to 408 form a reductase region; sequence GGWNGTRTFV…FGPKEELVAV (260 aa). The 112-residue stretch at 152 to 263 folds into the FAD-binding FR-type domain; that stretch reads NGTRTFVVTK…GPPCGEFTVD (112 aa). Residues Tyr190 and 205–208 contribute to the FAD site; that span reads RNYS. 277–282 is a binding site for NADP(+); it reads GIGVTP. 398–401 provides a ligand contact to FAD; it reads FFGP.

This sequence belongs to the globin family. Two-domain flavohemoproteins subfamily. In the C-terminal section; belongs to the flavoprotein pyridine nucleotide cytochrome reductase family. The cofactor is heme b. FAD serves as cofactor.

The catalysed reaction is 2 nitric oxide + NADPH + 2 O2 = 2 nitrate + NADP(+) + H(+). It catalyses the reaction 2 nitric oxide + NADH + 2 O2 = 2 nitrate + NAD(+) + H(+). This chain is Flavohemoprotein, found in Rhodopirellula baltica (strain DSM 10527 / NCIMB 13988 / SH1).